The following is a 232-amino-acid chain: Lipoprotein-releasing system ATP-binding protein LolD (232 aa).

Positions 11–231 (VYLHDIKRQY…SIEDGVIVEL (221 aa)) constitute an ABC transporter domain. 47-54 (APSGSGKS) is a binding site for ATP.

Belongs to the ABC transporter superfamily. Lipoprotein translocase (TC 3.A.1.125) family. The complex is composed of two ATP-binding proteins (LolD) and two transmembrane proteins (LolC and LolE).

It is found in the cell inner membrane. Part of the ABC transporter complex LolCDE involved in the translocation of mature outer membrane-directed lipoproteins, from the inner membrane to the periplasmic chaperone, LolA. Responsible for the formation of the LolA-lipoprotein complex in an ATP-dependent manner. The chain is Lipoprotein-releasing system ATP-binding protein LolD from Rhodopseudomonas palustris (strain BisB5).